Here is a 427-residue protein sequence, read N- to C-terminus: Mitogen-activated protein kinase 8 (427 aa).

In terms of domain architecture, Protein kinase spans 26–321 (YQNLKPIGSG…VDEALQHPYI (296 aa)). ATP contacts are provided by residues 32-40 (IGSGAQGIV) and Lys55. The residue at position 116 (Cys116) is an S-nitrosocysteine. The active-site Proton acceptor is the Asp151. Thr183 carries the phosphothreonine; by MAP2K7 modification. The TXY motif lies at 183-185 (TPY). Tyr185 bears the Phosphotyrosine; by MAP2K4 mark. Residues Met301 and Ser377 each carry the phosphoserine modification. Positions 371–427 (VIRGQPSPLGAAVINGSQHPSSSSSVNDVSSMSTDPTLASDTDSSLEAAAGPLGCCR) are disordered. Over residues 387–403 (SQHPSSSSSVNDVSSMS) the composition is skewed to low complexity. The span at 404–415 (TDPTLASDTDSS) shows a compositional bias: polar residues.

Belongs to the protein kinase superfamily. CMGC Ser/Thr protein kinase family. MAP kinase subfamily. As to quaternary structure, forms a complex with MAPK8IP1 and ARHGEF28. Found in a complex with SH3RF1, RAC1, MAP3K11/MLK3, MAP2K7/MKK7 and MAPK8IP1/JIP1. Found in a complex with SH3RF1, RAC2, MAP3K7/TAK1, MAP2K7/MKK7, MAPK8IP1/JIP1 and MAPK9/JNK2. Binds to at least four scaffolding proteins, MAPK8IP1/JIP-1, MAPK8IP2/JIP-2, MAPK8IP3/JIP-3/JSAP1 and SPAG9/MAPK8IP4/JIP-4. These proteins also bind other components of the JNK signaling pathway. Interacts with TP53 and WWOX. Interacts with JAMP. Interacts with HSF1 (via D domain and preferentially with hyperphosphorylated form); this interaction occurs under both normal growth conditions and immediately upon heat shock. Interacts (phosphorylated form) with NFE2; the interaction phosphorylates NFE2 in undifferentiated cells. Interacts with NFATC4. Interacts with MECOM; regulates JNK signaling. Interacts with PIN1; this interaction mediates MAPK8 conformational changes leading to the binding of MAPK8 to its substrates. Interacts with GRIPAP1. Interacts with POU5F1; phosphorylates POU5F1 at 'Ser-355'. Interacts with STMN2, STMN3 and STMN4. Interacts with HSF4. The cofactor is Mg(2+). Dually phosphorylated on Thr-183 and Tyr-185 by MAP2K7 and MAP2K4, which activates the enzyme. Phosphorylated by TAOK2. May be phosphorylated at Thr-183 and Tyr-185 by MAP3K1/MEKK1. Phosphorylated form is more concentrated at synapses than none-phosphorylated.

The protein localises to the cytoplasm. Its subcellular location is the nucleus. It is found in the synapse. It catalyses the reaction L-seryl-[protein] + ATP = O-phospho-L-seryl-[protein] + ADP + H(+). The catalysed reaction is L-threonyl-[protein] + ATP = O-phospho-L-threonyl-[protein] + ADP + H(+). Its activity is regulated as follows. Activated by threonine and tyrosine phosphorylation by either of two dual specificity kinases, MAP2K4 and MAP2K7. MAP2K4 shows a strong preference for Tyr-185 while MAP2K7 phosphorylates Tyr-183 preferentially. Inhibited by dual specificity phosphatases, such as DUSP1. Inhibited by SERPINB3. Functionally, serine/threonine-protein kinase involved in various processes such as cell proliferation, differentiation, migration, transformation and programmed cell death. Extracellular stimuli such as pro-inflammatory cytokines or physical stress stimulate the stress-activated protein kinase/c-Jun N-terminal kinase (SAP/JNK) signaling pathway. In this cascade, two dual specificity kinases MAP2K4/MKK4 and MAP2K7/MKK7 phosphorylate and activate MAPK8/JNK1. In turn, MAPK8/JNK1 phosphorylates a number of transcription factors, primarily components of AP-1 such as JUN, JDP2 and ATF2 and thus regulates AP-1 transcriptional activity. Phosphorylates the replication licensing factor CDT1, inhibiting the interaction between CDT1 and the histone H4 acetylase HBO1 to replication origins. Loss of this interaction abrogates the acetylation required for replication initiation. Promotes stressed cell apoptosis by phosphorylating key regulatory factors including p53/TP53 and Yes-associates protein YAP1. In T-cells, MAPK8 and MAPK9 are required for polarized differentiation of T-helper cells into Th1 cells. Contributes to the survival of erythroid cells by phosphorylating the antagonist of cell death BAD upon EPO stimulation. Mediates starvation-induced BCL2 phosphorylation, BCL2 dissociation from BECN1, and thus activation of autophagy. Phosphorylates STMN2 and hence regulates microtubule dynamics, controlling neurite elongation in cortical neurons. In the developing brain, through its cytoplasmic activity on STMN2, negatively regulates the rate of exit from multipolar stage and of radial migration from the ventricular zone. Phosphorylates several other substrates including heat shock factor protein 4 (HSF4), the deacetylase SIRT1, ELK1, or the E3 ligase ITCH. Phosphorylates the CLOCK-BMAL1 heterodimer and plays a role in the regulation of the circadian clock. Phosphorylates the heat shock transcription factor HSF1, suppressing HSF1-induced transcriptional activity. Phosphorylates POU5F1, which results in the inhibition of POU5F1's transcriptional activity and enhances its proteasomal degradation. Phosphorylates JUND and this phosphorylation is inhibited in the presence of MEN1. In neurons, phosphorylates SYT4 which captures neuronal dense core vesicles at synapses. Phosphorylates EIF4ENIF1/4-ET in response to oxidative stress, promoting P-body assembly. Phosphorylates SIRT6 in response to oxidative stress, stimulating its mono-ADP-ribosyltransferase activity. Phosphorylates NLRP3, promoting assembly of the NLRP3 inflammasome. Phosphorylates ALKBH5 in response to reactive oxygen species (ROS), promoting ALKBH5 sumoylation and inactivation. In terms of biological role, JNK1 isoforms display different binding patterns: beta-1 preferentially binds to c-Jun, whereas alpha-1, alpha-2, and beta-2 have a similar low level of binding to both c-Jun or ATF2. However, there is no correlation between binding and phosphorylation, which is achieved at about the same efficiency by all isoforms. The polypeptide is Mitogen-activated protein kinase 8 (MAPK8) (Homo sapiens (Human)).